The sequence spans 453 residues: Calcium-binding tyrosine phosphorylation-regulated protein (453 aa).

Positions 12-49 constitute an RIIa domain; the sequence is YGLKTLLEGVSRAILKTNPTNITQFAAVYFKELIVFRE. Disordered stretches follow at residues 86-165, 246-278, and 406-453; these read PIKP…PVSA, PVSEAEPPKASSAPLQGEQEPPAHEAPDTQVTS, and IINP…PEQV. Low complexity predominate over residues 143 to 154; sequence DKPTTPKTDYTP.

As to quaternary structure, interacts with FSCB. In terms of processing, phosphorylated on tyrosine residues during in vitro capacitation. Dephosphorylation affects its ability to bind calcium. As to expression, expressed in spermatozoa.

The protein localises to the cytoplasm. The protein resides in the cytoskeleton. Its subcellular location is the cell projection. It is found in the cilium. It localises to the flagellum. Functionally, may function as a regulator of both motility- and head-associated functions such as capacitation and the acrosome reaction. May bind calcium in vitro. The chain is Calcium-binding tyrosine phosphorylation-regulated protein (Cabyr) from Mus musculus (Mouse).